The primary structure comprises 672 residues: Negative growth regulatory protein NGR1 (672 aa).

Methionine 1 bears the N-acetylmethionine mark. 2 stretches are compositionally biased toward polar residues: residues 1-13 and 23-32; these read MMSNVANASQRQE and SSTVETSTEP. 2 disordered regions span residues 1 to 40 and 77 to 102; these read MMSNVANASQRQENPYIIPLPPSSTVETSTEPPRTLWMGD and SSTSSSNNNTSEENAENQQSASNSTD. An N-acetylserine modification is found at methionine 2. RRM domains are found at residues 36-159, 192-271, and 360-432; these read LWMG…YSPT, FSLF…YATP, and TTVF…WGRP. A compositionally biased stretch (low complexity) spans 77-96; sequence SSTSSSNNNTSEENAENQQS. Serine 524 carries the phosphoserine modification. Residues 640–672 are disordered; that stretch reads LNIAPNSNNSKSSIMNKHPNRNNVPPIHPSLLH. Residues 645–656 show a composition bias toward low complexity; that stretch reads NSNNSKSSIMNK.

Its function is as follows. May be an RNA-binding protein involved in control of an RNA processing pathway that influences the regulation of cell growth in early log phase. Can bind to RNA and single-stranded DNA but not double-stranded DNA. This is Negative growth regulatory protein NGR1 (NGR1) from Saccharomyces cerevisiae (strain ATCC 204508 / S288c) (Baker's yeast).